We begin with the raw amino-acid sequence, 184 residues long: Peptidyl-tRNA hydrolase (184 aa).

Tyr14 serves as a coordination point for tRNA. Residue His19 is the Proton acceptor of the active site. The tRNA site is built by Phe64, Asn66, and Asn112.

Belongs to the PTH family. As to quaternary structure, monomer.

Its subcellular location is the cytoplasm. It catalyses the reaction an N-acyl-L-alpha-aminoacyl-tRNA + H2O = an N-acyl-L-amino acid + a tRNA + H(+). Hydrolyzes ribosome-free peptidyl-tRNAs (with 1 or more amino acids incorporated), which drop off the ribosome during protein synthesis, or as a result of ribosome stalling. Functionally, catalyzes the release of premature peptidyl moieties from peptidyl-tRNA molecules trapped in stalled 50S ribosomal subunits, and thus maintains levels of free tRNAs and 50S ribosomes. In Listeria innocua serovar 6a (strain ATCC BAA-680 / CLIP 11262), this protein is Peptidyl-tRNA hydrolase.